Here is a 478-residue protein sequence, read N- to C-terminus: Noelin-3 (478 aa).

The N-terminal stretch at 1-23 (MSPPLLKLGAVLSTMAMISNWMS) is a signal peptide. N-linked (GlcNAc...) asparagine glycans are attached at residues N33, N95, N179, N299, and N465. Residues 77-217 (CSRDAKSRQL…TRLRDCMKKL (141 aa)) adopt a coiled-coil conformation. Residues 218–470 (TCGKLMKITG…QVLFNVTLFH (253 aa)) form the Olfactomedin-like domain. C219 and C401 form a disulfide bridge.

As to quaternary structure, peripherally associated with AMPAR complex. AMPAR complex consists of an inner core made of 4 pore-forming GluA/GRIA proteins (GRIA1, GRIA2, GRIA3 and GRIA4) and 4 major auxiliary subunits arranged in a twofold symmetry. One of the two pairs of distinct binding sites is occupied either by CNIH2, CNIH3 or CACNG2, CACNG3. The other harbors CACNG2, CACNG3, CACNG4, CACNG8 or GSG1L. This inner core of AMPAR complex is complemented by outer core constituents binding directly to the GluA/GRIA proteins at sites distinct from the interaction sites of the inner core constituents. Outer core constituents include at least PRRT1, PRRT2, CKAMP44/SHISA9, FRRS1L and NRN1. The proteins of the inner and outer core serve as a platform for other, more peripherally associated AMPAR constituents, including OLFM3. Alone or in combination, these auxiliary subunits control the gating and pharmacology of the AMPAR complex and profoundly impact their biogenesis and protein processing. Homodimer. Interacts with MYOC. Interacts with OLFM2. As to expression, in the eye, expressed in trabecular meshwork and neural retina; in non-ocular tissues, expressed in brain and lung.

It is found in the secreted. The protein resides in the synapse. The chain is Noelin-3 (OLFM3) from Homo sapiens (Human).